The chain runs to 378 residues: E3 ubiquitin-protein ligase ATL9 (378 aa).

The signal sequence occupies residues 1 to 33 (MAILDTKSSRWIPHNLLFLLLLLLLQSVPYGFG). The chain crosses the membrane as a helical span at residues 51–71 (VVVVITVLFLVIFFMVFGSIF). The RING-type; atypical zinc-finger motif lies at 135–177 (CAVCLCEFEDDETLRLMPPCCHVFHADCVDVWLSEHSTCPLCR). Disordered regions lie at residues 187 to 211 (DDDDSTESYSGTDPGTISSSTDPER), 300 to 326 (ARSSRSGYRSGSVGSERSAFPYGRKSN), and 350 to 378 (FSGDAPKNLPTSIEAGERSFERLRPDERV). Polar residues predominate over residues 193–207 (ESYSGTDPGTISSST). Positions 301-317 (RSSRSGYRSGSVGSERS) are enriched in low complexity. Residues 364-378 (AGERSFERLRPDERV) show a composition bias toward basic and acidic residues.

It belongs to the RING-type zinc finger family. ATL subfamily.

It localises to the membrane. The catalysed reaction is S-ubiquitinyl-[E2 ubiquitin-conjugating enzyme]-L-cysteine + [acceptor protein]-L-lysine = [E2 ubiquitin-conjugating enzyme]-L-cysteine + N(6)-ubiquitinyl-[acceptor protein]-L-lysine.. Its pathway is protein modification; protein ubiquitination. In terms of biological role, E3 ubiquitin-protein ligase able to catalyze polyubiquitination with ubiquitin-conjugating enzyme E2 UBC8 in vitro. May be involved in the early steps of the plant defense signaling pathway. The protein is E3 ubiquitin-protein ligase ATL9 (ATL9) of Arabidopsis thaliana (Mouse-ear cress).